The primary structure comprises 248 residues: Myelin protein P0 (248 aa).

An N-terminal signal peptide occupies residues 1-29 (MAPGAPSSSPSPILAALLFSSLVLSPALA). Residues 30 to 143 (IVVYTDREIY…DIVGKTSQVT (114 aa)) enclose the Ig-like V-type domain. At 30 to 153 (IVVYTDREIY…LYVFEKVPTR (124 aa)) the chain is on the extracellular side. A disulfide bridge connects residues Cys-50 and Cys-127. N-linked (GlcNAc...) (complex) asparagine glycosylation is present at Asn-122. Residues 154-179 (YGVVLGAVIGGILGVVLLLLLLFYLI) traverse the membrane as a helical segment. Residues 180–248 (RYCWLRRQAA…GLGESRKDKK (69 aa)) lie on the Cytoplasmic side of the membrane. Ser-210 is subject to Phosphoserine; by PKC. Residues 222–248 (MLDHSRSTKAASEKKSKGLGESRKDKK) form a disordered region. The segment covering 224–248 (DHSRSTKAASEKKSKGLGESRKDKK) has biased composition (basic and acidic residues). Residues Ser-226 and Ser-228 each carry the phosphoserine modification. Residue Ser-233 is modified to Phosphoserine; by PKC. Phosphoserine occurs at positions 237 and 243.

The protein belongs to the myelin P0 protein family. In terms of assembly, homodimer and homotetramer. In terms of processing, N-glycosylated; contains sulfate-substituted glycan. As to expression, found only in peripheral nervous system Schwann cells.

Its subcellular location is the cell membrane. Is an adhesion molecule necessary for normal myelination in the peripheral nervous system. It mediates adhesion between adjacent myelin wraps and ultimately drives myelin compaction. This is Myelin protein P0 (Mpz) from Mus musculus (Mouse).